A 729-amino-acid polypeptide reads, in one-letter code: ATP-dependent RNA helicase DHX15 homolog (729 aa).

The disordered stretch occupies residues 1–25 (MSKRRIEVGETYGSKAKKDPEASSS). The Helicase ATP-binding domain occupies 82–246 (MRLLSLHQCI…FDNAPLMKVP (165 aa)). Position 95–102 (95–102 (GETGSGKT)) interacts with ATP. Positions 193–196 (DEAH) match the DEAH box motif. The Helicase C-terminal domain maps to 271-451 (TVIQIHMCEE…TVVLQLKKLG (181 aa)).

The protein belongs to the DEAD box helicase family. DEAH subfamily. DDX15/PRP43 sub-subfamily.

It catalyses the reaction ATP + H2O = ADP + phosphate + H(+). In terms of biological role, RNA helicase involved in mRNA processing and antiviral innate immunity. Acts as an activator of the p38 MAPK cascade. In Drosophila melanogaster (Fruit fly), this protein is ATP-dependent RNA helicase DHX15 homolog.